Consider the following 436-residue polypeptide: Peptidase B (436 aa).

Mn(2+) contacts are provided by lysine 201 and aspartate 206. Lysine 213 is a catalytic residue. Residues aspartate 224, aspartate 283, and glutamate 285 each contribute to the Mn(2+) site. The active site involves arginine 287.

It belongs to the peptidase M17 family. As to quaternary structure, homohexamer. Requires Mn(2+) as cofactor.

Its subcellular location is the cytoplasm. It carries out the reaction Release of an N-terminal amino acid, Xaa, from a peptide or arylamide. Xaa is preferably Glu or Asp but may be other amino acids, including Leu, Met, His, Cys and Gln.. Its function is as follows. Probably plays an important role in intracellular peptide degradation. This chain is Peptidase B, found in Pectobacterium carotovorum subsp. carotovorum (strain PC1).